We begin with the raw amino-acid sequence, 78 residues long: Spermatid-specific protein T1 (78 aa).

The interval Met1–Gly21 is hydrophobic. Residues Met1–Arg78 are disordered. Positions Gly20–Arg78 are enriched in basic residues.

Phosphorylation occurs at different degrees. The triphosphorylated form may be predominant in T1. SP1 appears to be phosphorylated in elongated spermatids, but dephosphorylated in mature sperm cells. In terms of tissue distribution, testis.

The protein resides in the nucleus. It is found in the chromosome. Its function is as follows. Cuttlefish spermiogenesis is characterized by a double nuclear protein transition: histones -&gt; spermatid-specific proteins (T1/T2) -&gt; protamines (SP1/SP2). The protamines compact sperm DNA into a highly condensed, stable and inactive complex. This chain is Spermatid-specific protein T1, found in Sepia officinalis (Common cuttlefish).